The primary structure comprises 313 residues: Formimidoylglutamase (313 aa).

Positions 130, 155, 157, 159, 241, and 243 each coordinate Mn(2+).

The protein belongs to the arginase family. Mn(2+) serves as cofactor.

It catalyses the reaction N-formimidoyl-L-glutamate + H2O = formamide + L-glutamate. Its pathway is amino-acid degradation; L-histidine degradation into L-glutamate; L-glutamate from N-formimidoyl-L-glutamate (hydrolase route): step 1/1. Its function is as follows. Catalyzes the conversion of N-formimidoyl-L-glutamate to L-glutamate and formamide. The protein is Formimidoylglutamase of Salmonella heidelberg (strain SL476).